The following is a 157-amino-acid chain: MRLWVLAIGSKMPAWVEAGVAEYSARMPPQLRVEWRGLPLARRGRSGDPVRWRREEGERILAATPAGAERIALEVNGRNLDSEALAQRIDTWFHSGRDVALWVGGPDGLDPALQPDWRWSLSPLTLAHPVVRVVLAEQLYRAWSIQAGLPYHRGGEE.

S-adenosyl-L-methionine-binding positions include Leu73, Gly104, and 121 to 126; that span reads LSPLTL.

It belongs to the RNA methyltransferase RlmH family. As to quaternary structure, homodimer.

The protein resides in the cytoplasm. It carries out the reaction pseudouridine(1915) in 23S rRNA + S-adenosyl-L-methionine = N(3)-methylpseudouridine(1915) in 23S rRNA + S-adenosyl-L-homocysteine + H(+). Specifically methylates the pseudouridine at position 1915 (m3Psi1915) in 23S rRNA. In Acidithiobacillus ferrooxidans (strain ATCC 23270 / DSM 14882 / CIP 104768 / NCIMB 8455) (Ferrobacillus ferrooxidans (strain ATCC 23270)), this protein is Ribosomal RNA large subunit methyltransferase H.